A 111-amino-acid polypeptide reads, in one-letter code: Ribonuclease P protein component (111 aa).

The protein belongs to the RnpA family. In terms of assembly, consists of a catalytic RNA component (M1 or rnpB) and a protein subunit.

The enzyme catalyses Endonucleolytic cleavage of RNA, removing 5'-extranucleotides from tRNA precursor.. Its function is as follows. RNaseP catalyzes the removal of the 5'-leader sequence from pre-tRNA to produce the mature 5'-terminus. It can also cleave other RNA substrates such as 4.5S RNA. The protein component plays an auxiliary but essential role in vivo by binding to the 5'-leader sequence and broadening the substrate specificity of the ribozyme. The chain is Ribonuclease P protein component from Clostridium botulinum (strain Okra / Type B1).